A 90-amino-acid polypeptide reads, in one-letter code: Probable Fe(2+)-trafficking protein (90 aa).

This sequence belongs to the Fe(2+)-trafficking protein family.

Functionally, could be a mediator in iron transactions between iron acquisition and iron-requiring processes, such as synthesis and/or repair of Fe-S clusters in biosynthetic enzymes. The polypeptide is Probable Fe(2+)-trafficking protein (Pseudomonas entomophila (strain L48)).